A 312-amino-acid polypeptide reads, in one-letter code: Tetraacyldisaccharide 4'-kinase (312 aa).

60-67 (IAGGSGKT) provides a ligand contact to ATP.

Belongs to the LpxK family.

The catalysed reaction is a lipid A disaccharide + ATP = a lipid IVA + ADP + H(+). It participates in glycolipid biosynthesis; lipid IV(A) biosynthesis; lipid IV(A) from (3R)-3-hydroxytetradecanoyl-[acyl-carrier-protein] and UDP-N-acetyl-alpha-D-glucosamine: step 6/6. Functionally, transfers the gamma-phosphate of ATP to the 4'-position of a tetraacyldisaccharide 1-phosphate intermediate (termed DS-1-P) to form tetraacyldisaccharide 1,4'-bis-phosphate (lipid IVA). The protein is Tetraacyldisaccharide 4'-kinase of Helicobacter pylori (strain HPAG1).